We begin with the raw amino-acid sequence, 255 residues long: Menaquinone reductase, iron-sulfur cluster-binding subunit (255 aa).

3 4Fe-4S ferredoxin-type domains span residues 11 to 41 (WGMV…PQPD), 66 to 97 (HDVA…KNEE), and 99 to 128 (GIVS…FNWF). Residues cysteine 20, cysteine 23, cysteine 26, cysteine 30, cysteine 75, cysteine 78, cysteine 83, cysteine 87, cysteine 108, cysteine 111, cysteine 114, and cysteine 118 each coordinate [4Fe-4S] cluster. [3Fe-4S] cluster contacts are provided by cysteine 155, cysteine 158, cysteine 188, and cysteine 192.

As to quaternary structure, the Qrc complex is composed of four subunits: QrcA, QrcB, QrcC and QrcD. Can form a supercomplex with the [NiFe] hydrogenase HynA1 and the tetraheme Type I cytochrome c3 TpIc(3), its physiological electron donors. Requires [4Fe-4S] cluster as cofactor. It depends on [3Fe-4S] cluster as a cofactor.

The protein localises to the periplasm. Functionally, component of the respiratory Qrc complex, that catalyzes the reduction of the menaquinone pool using electrons transferred from the reduced periplasmic cytochrome c3, and which is probably involved in sulfate respiration. Is likely essential for growth on H(2) or formate since the periplasmic hydrogenases and/or formate dehydrogenases act as primary electron donors for the Qrc complex. QrcC is an electron-transferring subunit; its cubane iron sulfur clusters form a pathway for electron transfer between the hemes of QrcA and the membrane quinone pool. The polypeptide is Menaquinone reductase, iron-sulfur cluster-binding subunit (Nitratidesulfovibrio vulgaris (strain ATCC 29579 / DSM 644 / CCUG 34227 / NCIMB 8303 / VKM B-1760 / Hildenborough) (Desulfovibrio vulgaris)).